The chain runs to 568 residues: MAGUK p55 subfamily member 3 (568 aa).

L27 domains are found at residues 6–60 (EDSG…ERQS) and 61–118 (PTPV…FDPV). The PDZ domain maps to 137-218 (IVRLVKNKEP…SITLKIIPAT (82 aa)). The SH3 domain occupies 226 to 296 (DSKVFMRALF…PSKQFQERRL (71 aa)). Ser-307 is subject to Phosphoserine. A Guanylate kinase-like domain is found at 385–568 (PRLVVLIGSL…QEPAASSELS (184 aa)).

The protein belongs to the MAGUK family. As to quaternary structure, interacts with HTR2C; this interaction stabilizes the receptor at the plasma membrane and prevents the desensitization of the HTR2C receptor-mediated calcium response. Interacts with HTR2A. Interacts with HTR4. Interacts (via PDZ domain) with CADM1 (via C-terminus)Interacts (via PDZ domain) with CADM1; this interaction connects CADM1 with DLG1. Interacts (via Guanylate kinase-like domain) with PALS1. Interacts with DLG1 (via N-terminus); this interaction connects CADM1 with DLG1 and links CADM1 with the regulatory subunit of phosphoinositide-3-kinase (PI3K) by forming a multiprotein complex and participates in cell spreading. As to expression, expressed in brain, skeletal muscle, testis, kidney, and lung.

It is found in the apical cell membrane. Its subcellular location is the cell membrane. The protein localises to the cell junction. The protein resides in the adherens junction. Its function is as follows. Participates in cell spreading through the phosphoinositide-3-kinase (PI3K) pathway by connecting CADM1 to DLG1 and the regulatory subunit of phosphoinositide-3-kinase (PI3K). Stabilizes HTR2C at the plasma membrane and prevents its desensitization. May participates in the maintenance of adherens junctions. This is MAGUK p55 subfamily member 3 from Mus musculus (Mouse).